The following is a 58-amino-acid chain: Large ribosomal subunit protein uL30 (58 aa).

The protein belongs to the universal ribosomal protein uL30 family. In terms of assembly, part of the 50S ribosomal subunit.

In Erythrobacter litoralis (strain HTCC2594), this protein is Large ribosomal subunit protein uL30.